We begin with the raw amino-acid sequence, 245 residues long: Demethylmenaquinone methyltransferase (245 aa).

Residues T58, D79, and 106–107 (NA) each bind S-adenosyl-L-methionine.

This sequence belongs to the class I-like SAM-binding methyltransferase superfamily. MenG/UbiE family.

The catalysed reaction is a 2-demethylmenaquinol + S-adenosyl-L-methionine = a menaquinol + S-adenosyl-L-homocysteine + H(+). The protein operates within quinol/quinone metabolism; menaquinone biosynthesis; menaquinol from 1,4-dihydroxy-2-naphthoate: step 2/2. Functionally, methyltransferase required for the conversion of demethylmenaquinol (DMKH2) to menaquinol (MKH2). The sequence is that of Demethylmenaquinone methyltransferase from Halalkalibacterium halodurans (strain ATCC BAA-125 / DSM 18197 / FERM 7344 / JCM 9153 / C-125) (Bacillus halodurans).